A 142-amino-acid polypeptide reads, in one-letter code: Small ribosomal subunit protein uS12 (142 aa).

This sequence belongs to the universal ribosomal protein uS12 family. Part of the 30S ribosomal subunit.

In terms of biological role, with S4 and S5 plays an important role in translational accuracy. Located at the interface of the 30S and 50S subunits. In Methanosarcina mazei (strain ATCC BAA-159 / DSM 3647 / Goe1 / Go1 / JCM 11833 / OCM 88) (Methanosarcina frisia), this protein is Small ribosomal subunit protein uS12.